The sequence spans 324 residues: DNA-directed RNA polymerase subunit alpha (324 aa).

Positions 1-228 (MIEFQKPTIR…EHFNLFTDLS (228 aa)) are alpha N-terminal domain (alpha-NTD). Residues 245-324 (RNKLLDMTIE…STPKEEEEEK (80 aa)) form an alpha C-terminal domain (alpha-CTD) region.

It belongs to the RNA polymerase alpha chain family. As to quaternary structure, homodimer. The RNAP catalytic core consists of 2 alpha, 1 beta, 1 beta' and 1 omega subunit. When a sigma factor is associated with the core the holoenzyme is formed, which can initiate transcription.

The enzyme catalyses RNA(n) + a ribonucleoside 5'-triphosphate = RNA(n+1) + diphosphate. DNA-dependent RNA polymerase catalyzes the transcription of DNA into RNA using the four ribonucleoside triphosphates as substrates. This is DNA-directed RNA polymerase subunit alpha from Caldicellulosiruptor bescii (strain ATCC BAA-1888 / DSM 6725 / KCTC 15123 / Z-1320) (Anaerocellum thermophilum).